The sequence spans 590 residues: Aspartate--tRNA ligase (590 aa).

Glutamate 172 provides a ligand contact to L-aspartate. The tract at residues 196-199 (QLFK) is aspartate. Arginine 218 contributes to the L-aspartate binding site. ATP contacts are provided by residues 218 to 220 (RDE) and glutamine 227. Residue histidine 449 participates in L-aspartate binding. Position 483 (glutamate 483) interacts with ATP. Arginine 490 lines the L-aspartate pocket. 535–538 (GLDR) contributes to the ATP binding site.

This sequence belongs to the class-II aminoacyl-tRNA synthetase family. Type 1 subfamily. In terms of assembly, homodimer.

Its subcellular location is the cytoplasm. It catalyses the reaction tRNA(Asp) + L-aspartate + ATP = L-aspartyl-tRNA(Asp) + AMP + diphosphate. Functionally, catalyzes the attachment of L-aspartate to tRNA(Asp) in a two-step reaction: L-aspartate is first activated by ATP to form Asp-AMP and then transferred to the acceptor end of tRNA(Asp). In Glaesserella parasuis serovar 5 (strain SH0165) (Haemophilus parasuis), this protein is Aspartate--tRNA ligase.